Consider the following 396-residue polypeptide: Elongation factor Tu 2 (396 aa).

Positions Lys-10–Glu-206 constitute a tr-type G domain. The interval Gly-19–Thr-26 is G1. Gly-19 to Thr-26 is a GTP binding site. Position 26 (Thr-26) interacts with Mg(2+). A G2 region spans residues Gly-60–Ala-64. The segment at Asp-81 to Gly-84 is G3. GTP is bound by residues Asp-81 to His-85 and Asn-136 to Asp-139. The interval Asn-136–Asp-139 is G4. A G5 region spans residues Ser-174–Leu-176.

The protein belongs to the TRAFAC class translation factor GTPase superfamily. Classic translation factor GTPase family. EF-Tu/EF-1A subfamily. As to quaternary structure, monomer.

The protein resides in the cytoplasm. It carries out the reaction GTP + H2O = GDP + phosphate + H(+). Functionally, GTP hydrolase that promotes the GTP-dependent binding of aminoacyl-tRNA to the A-site of ribosomes during protein biosynthesis. This chain is Elongation factor Tu 2, found in Halorhodospira halophila (strain DSM 244 / SL1) (Ectothiorhodospira halophila (strain DSM 244 / SL1)).